The sequence spans 70 residues: U-scoloptoxin(20)-Sm1a (70 aa).

The N-terminal stretch at 1–24 (MKKRSQVFCIFIAMVLLILPLSMS) is a signal peptide.

The protein belongs to the scoloptoxin-20 family. Contains 3 disulfide bonds. In terms of tissue distribution, expressed by the venom gland.

Its subcellular location is the secreted. In Scolopendra morsitans (Tanzanian blue ringleg centipede), this protein is U-scoloptoxin(20)-Sm1a.